We begin with the raw amino-acid sequence, 155 residues long: Troponin C, isoform 3 (155 aa).

4 consecutive EF-hand domains span residues 11-46 (EQIA…MGQP), 47-82 (FDKK…FIVE), 87-122 (AMQK…LDDQ), and 123-155 (LTEQ…MTGE). The Ca(2+) site is built by Asp-60, Asp-62, Ser-64, Arg-66, and Glu-71. Ca(2+) is bound by residues Asp-136, Asp-138, Ser-140, Thr-142, and Glu-147.

The protein belongs to the troponin C family. Present in both larval and adult muscles.

This is Troponin C, isoform 3 (TpnC73F) from Drosophila melanogaster (Fruit fly).